Here is a 452-residue protein sequence, read N- to C-terminus: Pup--protein ligase (452 aa).

E9 lines the Mg(2+) pocket. An ATP-binding site is contributed by R53. Position 55 (Y55) interacts with Mg(2+). The active-site Proton acceptor is the D57. A Mg(2+)-binding site is contributed by E63. Positions 66 and 419 each coordinate ATP.

This sequence belongs to the Pup ligase/Pup deamidase family. Pup-conjugating enzyme subfamily.

The enzyme catalyses ATP + [prokaryotic ubiquitin-like protein]-L-glutamate + [protein]-L-lysine = ADP + phosphate + N(6)-([prokaryotic ubiquitin-like protein]-gamma-L-glutamyl)-[protein]-L-lysine.. The protein operates within protein degradation; proteasomal Pup-dependent pathway. It functions in the pathway protein modification; protein pupylation. Catalyzes the covalent attachment of the prokaryotic ubiquitin-like protein modifier Pup to the proteasomal substrate proteins, thereby targeting them for proteasomal degradation. This tagging system is termed pupylation. The ligation reaction involves the side-chain carboxylate of the C-terminal glutamate of Pup and the side-chain amino group of a substrate lysine. This is Pup--protein ligase from Mycobacterium ulcerans (strain Agy99).